The primary structure comprises 87 residues: uncharacterized protein (87 aa).

This sequence belongs to the SF3B5 family.

This is an uncharacterized protein from Arabidopsis thaliana (Mouse-ear cress).